The sequence spans 384 residues: Probable E3 ubiquitin-protein ligase rnf113 (384 aa).

Positions 1-11 (MDLFRKPKKRN) are enriched in basic residues. Residues 1–96 (MDLFRKPKKR…GPSGPRDQGA (96 aa)) form a disordered region. A compositionally biased stretch (polar residues) spans 42-52 (PMVQSTKQLDA). Over residues 60-71 (SSDDSDDSDDNQ) the composition is skewed to acidic residues. Residues 175-203 (DFAPDICKDYKETGFCTFGDSCKFVHDRS) form a C3H1-type zinc finger. Residues 241–279 (CFICGNPFVDPIVTKCKHYFCTGCALKSFQKSSKCPICQ) form an RING-type zinc finger. Residues 299–384 (KKQQQKQEAE…ESDDDDAEKD (86 aa)) form a disordered region. Composition is skewed to basic and acidic residues over residues 303–312 (QKQEAEKQEE) and 320–334 (EKPHECDDHHHHDHE). Residues 351 to 384 (EKSDEEQEIMMEDVEGLEGGENDSESDDDDAEKD) are compositionally biased toward acidic residues.

It carries out the reaction S-ubiquitinyl-[E2 ubiquitin-conjugating enzyme]-L-cysteine + [acceptor protein]-L-lysine = [E2 ubiquitin-conjugating enzyme]-L-cysteine + N(6)-ubiquitinyl-[acceptor protein]-L-lysine.. The protein operates within protein modification; protein ubiquitination. In terms of biological role, may function as E3 ubiquitin-protein ligase that catalyzes the transfer of ubiquitin onto target proteins. May play a role in DNA repair via its role in the synthesis of 'Lys-63'-linked polyubiquitin chains that recruit proteins involved in repair to sites of DNA damage by alkylating agents. This chain is Probable E3 ubiquitin-protein ligase rnf113 (rnf-113), found in Caenorhabditis elegans.